The chain runs to 422 residues: Transcription termination factor Rho (422 aa).

A Rho RNA-BD domain is found at 52-127 (EVGGDGVLEV…TRVTKINFDD (76 aa)). ATP-binding positions include 173-178 (GKGQRG), 185-190 (RTGKTV), and R216.

This sequence belongs to the Rho family. Homohexamer. The homohexamer assembles into an open ring structure.

Its function is as follows. Facilitates transcription termination by a mechanism that involves Rho binding to the nascent RNA, activation of Rho's RNA-dependent ATPase activity, and release of the mRNA from the DNA template. This chain is Transcription termination factor Rho, found in Cereibacter sphaeroides (strain ATCC 17023 / DSM 158 / JCM 6121 / CCUG 31486 / LMG 2827 / NBRC 12203 / NCIMB 8253 / ATH 2.4.1.) (Rhodobacter sphaeroides).